Here is a 128-residue protein sequence, read N- to C-terminus: UPF0325 protein YaeH (128 aa).

This sequence belongs to the UPF0325 family.

This chain is UPF0325 protein YaeH, found in Salmonella agona (strain SL483).